The sequence spans 201 residues: Ras-related protein Rab-1B (201 aa).

M1 is modified (N-acetylmethionine). GTP contacts are provided by S17, G18, V19, G20, K21, S22, C23, Y33, T34, E35, S36, S39, and T40. Position 22 (S22) interacts with Mg(2+). A Switch 1 motif is present at residues 30–45 (DDTYTESYISTIGVDF). 2 residues coordinate Mg(2+): T40 and D63. The switch 2 region; required for interaction with REP1/CHM stretch occupies residues 64 to 83 (TAGQERFRTITSSYYRGAHG). The short motif at 65 to 80 (AGQERFRTITSSYYRG) is the Switch 2 element. GTP-binding residues include G66, N121, K122, D124, S151, A152, and K153. The tract at residues 174–201 (GPGAASGGERPNLKIDSTPVKPAGGGCC) is disordered. S-geranylgeranyl cysteine attachment occurs at residues C200 and C201. At C201 the chain carries Cysteine methyl ester.

This sequence belongs to the small GTPase superfamily. Rab family. Interacts with MICAL1 and MICAL2. Interacts (in GTP-bound form) with MICALCL, MICAL1 and MILCAL3. Interacts with GDI1; the interaction requires the GDP-bound state. Interacts with CHM/REP1; the interaction requires the GDP-bound form and is necessary for prenylation by GGTase II. Interacts with RabGAP TBC1D20. Interacts (in GDP-bound form) with lipid phosphatase MTMR6 (via GRAM domain); the interaction regulates MTMR6 recruitment to the endoplasmic reticulum-Golgi intermediate compartment. Interacts (in GDP-bound form) with lipid phosphatase MTMR7. Requires Mg(2+) as cofactor. In terms of processing, prenylated; by GGTase II, only after interaction of the substrate with Rab escort protein 1 (REP1).

It localises to the cytoplasm. The protein localises to the membrane. Its subcellular location is the preautophagosomal structure membrane. The protein resides in the perinuclear region. It carries out the reaction GTP + H2O = GDP + phosphate + H(+). Regulated by guanine nucleotide exchange factors (GEFs) which promote the exchange of bound GDP for free GTP. Regulated by GTPase activating proteins (GAPs) including TBC1D20 which increases the GTP hydrolysis activity. Inhibited by GDP dissociation inhibitors (GDIs). In terms of biological role, the small GTPases Rab are key regulators of intracellular membrane trafficking, from the formation of transport vesicles to their fusion with membranes. Rabs cycle between an inactive GDP-bound form and an active GTP-bound form that is able to recruit to membranes different set of downstream effectors directly responsible for vesicle formation, movement, tethering and fusion. Plays a role in the initial events of the autophagic vacuole development which take place at specialized regions of the endoplasmic reticulum. Regulates vesicular transport between the endoplasmic reticulum and successive Golgi compartments. Required to modulate the compacted morphology of the Golgi. Promotes the recruitment of lipid phosphatase MTMR6 to the endoplasmic reticulum-Golgi intermediate compartment. The polypeptide is Ras-related protein Rab-1B (RAB1B) (Macaca fascicularis (Crab-eating macaque)).